The sequence spans 363 residues: Cyanuric acid amidohydrolase (363 aa).

An RU A region spans residues 1-103; that stretch reads MKTRVTRLTV…LVFEVDDSAP (103 aa). Residues Arg-51 and 82-83 each bind substrate; that span reads SG. The RU B stretch occupies residues 111–247; it reads GLAAGVAFTR…NEVLVLGNAP (137 aa). Residue Lys-161 is part of the active site. Substrate contacts are provided by residues Arg-193 and 230–231; that span reads SA. Ser-230 functions as the Nucleophile in the catalytic mechanism. An RU C region spans residues 253–363; it reads YRIGHAVMED…GGPLALIVRS (111 aa). Glu-297 is a binding site for Mg(2+). Substrate contacts are provided by residues Arg-324 and 343-344; that span reads SG. Positions 346, 349, 350, 351, and 354 each coordinate Mg(2+).

This sequence belongs to the cyclic amide hydrolase (CyAH) family. As to quaternary structure, homotetramer.

It carries out the reaction cyanurate + H2O = 1-carboxybiuret + H(+). It participates in xenobiotic degradation; atrazine degradation; biuret from cyanurate: step 1/1. Its activity is regulated as follows. Inhibited by barbituric acid. Its function is as follows. Responsible for the hydrolysis of cyanuric acid, an intermediate formed during catabolism of s-triazine based compounds in herbicides such as atrazine and polymers such as melamine. Catalyzes the hydrolytic opening of the s-triazine ring of cyanuric acid (2,4,6-trihydroxy-s-triazine) to yield carbon dioxide and carboxybiuret, which spontaneously decarboxylates to biuret. This Ectopseudomonas oleovorans (strain CECT 5344) (Pseudomonas pseudoalcaligenes) protein is Cyanuric acid amidohydrolase.